The primary structure comprises 314 residues: MPVKIPDDLPAAEILESENIFVMSETRAANQDIRPMKVLILNLMPNKIETETQLLRLLGNTPLQVDVDLLRIHDKASKHTSIDHMNNFYRDFEQIRQKNYDGLIITGAPLGKIEFDEVSYWDHIREIIDWSQQHVTSVLFLCWAAHAALYHLFGLNRSLLEIKRAGVFSHKRTSVHYPLLRGFDDEFFAPHSRFAEMDIEKLRAHPELEVLTESDEAGAYMVLSKNNRNLFVMGHPEYQKSTLKDEYNRDIAQGLTPELPKNYFKNDDPDQEPISRWHSHGSLLVSNWLNYYVYQLTPYNLDDMTGITPWESKD.

Cysteine 142 functions as the Acyl-thioester intermediate in the catalytic mechanism. Residues lysine 163 and serine 192 each contribute to the substrate site. Residue histidine 235 is the Proton acceptor of the active site. The active site involves glutamate 237. Arginine 249 serves as a coordination point for substrate.

It belongs to the MetA family.

Its subcellular location is the cytoplasm. The catalysed reaction is L-homoserine + succinyl-CoA = O-succinyl-L-homoserine + CoA. Its pathway is amino-acid biosynthesis; L-methionine biosynthesis via de novo pathway; O-succinyl-L-homoserine from L-homoserine: step 1/1. Its function is as follows. Transfers a succinyl group from succinyl-CoA to L-homoserine, forming succinyl-L-homoserine. In Shewanella pealeana (strain ATCC 700345 / ANG-SQ1), this protein is Homoserine O-succinyltransferase.